Here is an 88-residue protein sequence, read N- to C-terminus: Probable Fe(2+)-trafficking protein (88 aa).

The protein belongs to the Fe(2+)-trafficking protein family.

Its function is as follows. Could be a mediator in iron transactions between iron acquisition and iron-requiring processes, such as synthesis and/or repair of Fe-S clusters in biosynthetic enzymes. This chain is Probable Fe(2+)-trafficking protein, found in Neisseria gonorrhoeae (strain ATCC 700825 / FA 1090).